Reading from the N-terminus, the 201-residue chain is Small ribosomal subunit protein uS4 (201 aa).

The region spanning 91–151 (SRLDNVVYRA…EKSQKMNWFE (61 aa)) is the S4 RNA-binding domain.

This sequence belongs to the universal ribosomal protein uS4 family. Part of the 30S ribosomal subunit. Contacts protein S5. The interaction surface between S4 and S5 is involved in control of translational fidelity.

One of the primary rRNA binding proteins, it binds directly to 16S rRNA where it nucleates assembly of the body of the 30S subunit. Functionally, with S5 and S12 plays an important role in translational accuracy. The sequence is that of Small ribosomal subunit protein uS4 from Corynebacterium efficiens (strain DSM 44549 / YS-314 / AJ 12310 / JCM 11189 / NBRC 100395).